A 197-amino-acid polypeptide reads, in one-letter code: MIIRSAEFVISAVQPSQYPDTDLPEIAFAGRSNVGKSSMINLLVNRKNLVKTSSTPGKTRLINFFDINGQLMFVDLPGYGYAKVSRKEQKTWGPMVERYLSSRKTLRGLMLLMDLRREPREDEFLMMQWCAHYDIPWKMVLTKADKFKKTAADRRRHEIARAVGIGADEMILFSTLQKMGRDPALETIARMTGILEE.

The region spanning Asp-22–Ile-194 is the EngB-type G domain. GTP-binding positions include Gly-30–Ser-37, Gly-57–Leu-61, Asp-75–Gly-78, Thr-142–Asp-145, and Phe-173–Thr-175. 2 residues coordinate Mg(2+): Ser-37 and Thr-59.

The protein belongs to the TRAFAC class TrmE-Era-EngA-EngB-Septin-like GTPase superfamily. EngB GTPase family. It depends on Mg(2+) as a cofactor.

Necessary for normal cell division and for the maintenance of normal septation. In Desulfosudis oleivorans (strain DSM 6200 / JCM 39069 / Hxd3) (Desulfococcus oleovorans), this protein is Probable GTP-binding protein EngB.